The chain runs to 447 residues: Sporulation protein YpeB (447 aa).

Belongs to the YpeB family.

Functionally, required for spore cortex hydrolysis during germination. Appears to be required for either expression, localization, activation or function of SleB. The sequence is that of Sporulation protein YpeB from Halalkalibacterium halodurans (strain ATCC BAA-125 / DSM 18197 / FERM 7344 / JCM 9153 / C-125) (Bacillus halodurans).